A 246-amino-acid chain; its full sequence is uncharacterized protein (246 aa).

It to M.jannaschii MJ1676.

This is an uncharacterized protein from Methanothermobacter thermautotrophicus (strain ATCC 29096 / DSM 1053 / JCM 10044 / NBRC 100330 / Delta H) (Methanobacterium thermoautotrophicum).